The sequence spans 303 residues: Recombination-associated protein RdgC (303 aa).

It belongs to the RdgC family.

Its subcellular location is the cytoplasm. The protein resides in the nucleoid. Its function is as follows. May be involved in recombination. In Salmonella newport (strain SL254), this protein is Recombination-associated protein RdgC.